Here is a 428-residue protein sequence, read N- to C-terminus: D-amino acid dehydrogenase (428 aa).

3-17 (VVVLGSGVVGVTSAY) contributes to the FAD binding site.

It belongs to the DadA oxidoreductase family. FAD serves as cofactor.

The enzyme catalyses a D-alpha-amino acid + A + H2O = a 2-oxocarboxylate + AH2 + NH4(+). The protein operates within amino-acid degradation; D-alanine degradation; NH(3) and pyruvate from D-alanine: step 1/1. Its function is as follows. Oxidative deamination of D-amino acids. The sequence is that of D-amino acid dehydrogenase from Paraburkholderia phytofirmans (strain DSM 17436 / LMG 22146 / PsJN) (Burkholderia phytofirmans).